The chain runs to 477 residues: Bile acid transporter (477 aa).

The next 15 helical transmembrane spans lie at 13–33, 50–70, 83–103, 107–127, 139–159, 166–186, 206–226, 228–248, 272–292, 301–321, 333–353, 359–379, 381–401, 406–426, and 444–464; these read FVPFAIAALLVSLIGGFTAVL, WISLALAMSSAACAPILGKLG, IVIFAAGNVLTAVATSLIFML, FIVGIGTAAISPIVMAYIVTE, LYMLISSGAVVVGPTCGGLIM, VMMWVCVALCVVVFLICTFSI, LVVVFFSLFLCIPSFGQNIGW, STAFIAAAAVALVALFILVMV, LILFLTQGLMMANMTNVIVFV, IISSFAISIMYIGMSLGSVII, VLTFSLVLTAIGCALMYLFKA, IFAASLGILGFGLGGNATIFM, VALSGLSSEVAGSGTGTYGLF, APFGVAVFVPMFANGVTANIA, and ISSIQTLTLVELGCIVVGIIL.

This sequence belongs to the major facilitator superfamily.

It is found in the cell membrane. The protein operates within lipid metabolism; bile acid degradation. The chain is Bile acid transporter (baiG) from Clostridium scindens (strain JCM 10418 / VPI 12708).